The following is a 645-amino-acid chain: Threonine--tRNA ligase (645 aa).

Positions 1 to 62 constitute a TGS domain; the sequence is MSIHITFPDG…VEDGSLEIVT (62 aa). The catalytic stretch occupies residues 242–541; sequence DHRKLGKELD…LTEVYKGAFP (300 aa). Zn(2+) is bound by residues Cys336, His387, and His518.

This sequence belongs to the class-II aminoacyl-tRNA synthetase family. As to quaternary structure, homodimer. It depends on Zn(2+) as a cofactor.

The protein localises to the cytoplasm. It catalyses the reaction tRNA(Thr) + L-threonine + ATP = L-threonyl-tRNA(Thr) + AMP + diphosphate + H(+). Catalyzes the attachment of threonine to tRNA(Thr) in a two-step reaction: L-threonine is first activated by ATP to form Thr-AMP and then transferred to the acceptor end of tRNA(Thr). Also edits incorrectly charged L-seryl-tRNA(Thr). This Enterococcus faecalis (strain ATCC 700802 / V583) protein is Threonine--tRNA ligase.